The sequence spans 329 residues: Tyrosine recombinase XerC 1 (329 aa).

In terms of domain architecture, Core-binding (CB) spans 14–101; the sequence is APPHPQIGAY…AWRGWYQWLA (88 aa). A Tyr recombinase domain is found at 123 to 320; it reads RLPKALSVEQ…DFQHLAKIYD (198 aa). Active-site residues include arginine 163, lysine 198, histidine 272, arginine 275, and histidine 298. Catalysis depends on tyrosine 307, which acts as the O-(3'-phospho-DNA)-tyrosine intermediate.

The protein belongs to the 'phage' integrase family. XerC subfamily. Forms a cyclic heterotetrameric complex composed of two molecules of XerC and two molecules of XerD.

Its subcellular location is the cytoplasm. Functionally, site-specific tyrosine recombinase, which acts by catalyzing the cutting and rejoining of the recombining DNA molecules. The XerC-XerD complex is essential to convert dimers of the bacterial chromosome into monomers to permit their segregation at cell division. It also contributes to the segregational stability of plasmids. The polypeptide is Tyrosine recombinase XerC 1 (xerC1) (Ralstonia nicotianae (strain ATCC BAA-1114 / GMI1000) (Ralstonia solanacearum)).